We begin with the raw amino-acid sequence, 120 residues long: NAD(P)H-quinone oxidoreductase subunit 3, chloroplastic (120 aa).

3 consecutive transmembrane segments (helical) span residues 9-29 (IFWAFLMISSVIPILAFLISG), 64-84 (MFALVFVVFDVETVFLYPWAM), and 88-108 (VLGVSAFIEALIFVLIPIVGS).

The protein belongs to the complex I subunit 3 family. As to quaternary structure, NDH is composed of at least 16 different subunits, 5 of which are encoded in the nucleus.

The protein resides in the plastid. The protein localises to the chloroplast thylakoid membrane. It catalyses the reaction a plastoquinone + NADH + (n+1) H(+)(in) = a plastoquinol + NAD(+) + n H(+)(out). It carries out the reaction a plastoquinone + NADPH + (n+1) H(+)(in) = a plastoquinol + NADP(+) + n H(+)(out). NDH shuttles electrons from NAD(P)H:plastoquinone, via FMN and iron-sulfur (Fe-S) centers, to quinones in the photosynthetic chain and possibly in a chloroplast respiratory chain. The immediate electron acceptor for the enzyme in this species is believed to be plastoquinone. Couples the redox reaction to proton translocation, and thus conserves the redox energy in a proton gradient. The polypeptide is NAD(P)H-quinone oxidoreductase subunit 3, chloroplastic (Illicium oligandrum (Star anise)).